The sequence spans 86 residues: V-type proton ATPase subunit e (86 aa).

A helical transmembrane segment spans residues 1 to 21 (MGILIPLVSVSAFWAIIGFGG). Residues 22-32 (PWIVPKGPNRG) are Cytoplasmic-facing. Residues 33–53 (IIQLMIIMTAVCCWMFWIMVF) form a helical membrane-spanning segment. Topologically, residues 54-86 (LHQLNPLIGPQINVKTIRWISEKWGDAPNVINN) are lumenal.

Belongs to the V-ATPase e1/e2 subunit family. In terms of assembly, V-ATPase is a heteromultimeric enzyme made up of two complexes: the ATP-hydrolytic V1 complex and the proton translocation V0 complex. The V1 complex consists of three catalytic AB heterodimers that form a heterohexamer, three peripheral stalks each consisting of EG heterodimers, one central rotor including subunits D and F, and the regulatory subunits C and H. The proton translocation complex V0 consists of the proton transport subunit a, a ring of proteolipid subunits c9c'', rotary subunit d, subunits e and f, and the accessory subunits vah-19/Ac45 and vah-20/PRR.

Its subcellular location is the apical cell membrane. In terms of biological role, subunit of the V0 complex of vacuolar(H+)-ATPase (V-ATPase), a multisubunit enzyme composed of a peripheral complex (V1) that hydrolyzes ATP and a membrane integral complex (V0) that translocates protons. V-ATPase is responsible for acidifying and maintaining the pH of intracellular compartments and in some cell types, is targeted to the plasma membrane, where it is responsible for acidifying the extracellular environment. During embryonic development, the V-ATPase is required to repress fusion of epidermal cells probably by negatively regulating eff-1-mediated cell fusion. The sequence is that of V-type proton ATPase subunit e from Caenorhabditis elegans.